Consider the following 157-residue polypeptide: Endoribonuclease YbeY (157 aa).

Positions 122, 126, and 132 each coordinate Zn(2+).

This sequence belongs to the endoribonuclease YbeY family. It depends on Zn(2+) as a cofactor.

The protein resides in the cytoplasm. Its function is as follows. Single strand-specific metallo-endoribonuclease involved in late-stage 70S ribosome quality control and in maturation of the 3' terminus of the 16S rRNA. This Bacillus subtilis (strain 168) protein is Endoribonuclease YbeY.